We begin with the raw amino-acid sequence, 123 residues long: DNA-directed RNA polymerase I subunit RPA12 (123 aa).

Cys-17, Cys-20, Cys-35, Cys-38, Cys-84, and Cys-87 together coordinate Zn(2+). The C4-type zinc-finger motif lies at 17–38 (CPDCGSVLPLPGVQDAVACTRC). Residues 80–120 (VDRRCSRCGHEGMAYHTRQMRSADEGQTVFYTCTNCKFQEK) form a TFIIS-type zinc finger. The Hairpin motif lies at 103–104 (DE). 2 residues coordinate Zn(2+): Cys-112 and Cys-115.

It belongs to the archaeal RpoM/eukaryotic RPA12/RPB9/RPC11 RNA polymerase family. Component of the RNA polymerase I (Pol I) complex consisting of at least 13 subunits.

The protein localises to the nucleus. The protein resides in the nucleolus. Functionally, core component of RNA polymerase I (Pol I), a DNA-dependent RNA polymerase which synthesizes ribosomal RNA precursors using the four ribonucleoside triphosphates as substrates. Can mediate Pol I proofreading of the nascent RNA transcript. Anchors into the Pol I active site to monitor transcription fidelity and cleave mis-incorporated 5'-ribonucleotides. This Bos taurus (Bovine) protein is DNA-directed RNA polymerase I subunit RPA12.